We begin with the raw amino-acid sequence, 126 residues long: Holo-[acyl-carrier-protein] synthase (126 aa).

Positions 8 and 57 each coordinate Mg(2+).

It belongs to the P-Pant transferase superfamily. AcpS family. Mg(2+) is required as a cofactor.

The protein resides in the cytoplasm. The enzyme catalyses apo-[ACP] + CoA = holo-[ACP] + adenosine 3',5'-bisphosphate + H(+). Transfers the 4'-phosphopantetheine moiety from coenzyme A to a Ser of acyl-carrier-protein. In Geobacter sulfurreducens (strain ATCC 51573 / DSM 12127 / PCA), this protein is Holo-[acyl-carrier-protein] synthase.